The sequence spans 405 residues: FAD-dependent monooxygenase thnD (405 aa).

Residues Glu30, Ala45, Arg106, Asp308, and Gly321 each contribute to the FAD site.

The protein belongs to the paxM FAD-dependent monooxygenase family. FAD is required as a cofactor.

Functionally, FAD-dependent monooxygenase; part of the gene cluster that produces the tetronate natural products trihazones. Transcription analysis of thnD confirmed this gene is expressed, hence its role in the biosynthetic pathway remains cryptic. The pathway begins with the formation of trihazone A by the hybrid PKS-NRPS synthetase thnA and the trans-enoyl reductase thnE. Trihazone A is further decarboxylated by the 2-oxoglutarate-dependent dioxygenase thnC to produce trihazone D. The function of the FAD-dependent monooxygenase thnD has still to be identified. The protein is FAD-dependent monooxygenase thnD of Trichoderma harzianum (Hypocrea lixii).